Reading from the N-terminus, the 335-residue chain is Pharynx and intestine in excess protein 1 (335 aa).

K68 is covalently cross-linked (Glycyl lysine isopeptide (Lys-Gly) (interchain with G-Cter in SUMO)). The C3H1-type 1 zinc finger occupies 98–126 (EYKTRLCDAFRREGYCPYNDNCTYAHGQD). Positions 130 to 156 (VPRRRQEYYSRDPPRERRDSRSRRDDV) are enriched in basic and acidic residues. The tract at residues 130–188 (VPRRRQEYYSRDPPRERRDSRSRRDDVDTTINRSSSSASKHHDENRRPSNNHGSSNRRQ) is disordered. Composition is skewed to polar residues over residues 158-167 (TTINRSSSSA) and 177-187 (PSNNHGSSNRR). The C3H1-type 2 zinc finger occupies 184 to 211 (SNRRQICHNFERGNCRYGPRCRFIHVEQ). The required for inhibition of Ser-2 phosphorylation stretch occupies residues 288 to 291 (MAPT).

As to quaternary structure, interacts with hda-1, let-418 and mep-1. Interacts (via C terminus) with cit-1.1 (via C terminus). In terms of processing, sumoylated in adult germ cells.

The protein localises to the nucleus. The protein resides in the cytoplasm. It localises to the cytoskeleton. It is found in the microtubule organizing center. Its subcellular location is the centrosome. The protein localises to the spindle. The protein resides in the cytoplasmic granule. In terms of biological role, maternally provided pie-1 is required for germline cell fate determination. Functions as a repressor of RNA polymerase II-dependent gene expression in the developing germline. Required for expression of nos-2 in P4 germline blastomere cells. Inhibits the histone deacetylase activity of hda-1. Represses transcriptional activation of cdk-9 and cit-1.1, which are members of the P-TEFb complex. Acts redundantly with gei-17 to promote piRNA-mediated silencing and fertility in adult germline. Promotes the sumoylation of hda-1 in adult animals but not in embryos thereby regulating its interaction with mep-1. The polypeptide is Pharynx and intestine in excess protein 1 (Caenorhabditis elegans).